The chain runs to 236 residues: Phosphoribosylaminoimidazole-succinocarboxamide synthase (236 aa).

The protein belongs to the SAICAR synthetase family.

It carries out the reaction 5-amino-1-(5-phospho-D-ribosyl)imidazole-4-carboxylate + L-aspartate + ATP = (2S)-2-[5-amino-1-(5-phospho-beta-D-ribosyl)imidazole-4-carboxamido]succinate + ADP + phosphate + 2 H(+). It functions in the pathway purine metabolism; IMP biosynthesis via de novo pathway; 5-amino-1-(5-phospho-D-ribosyl)imidazole-4-carboxamide from 5-amino-1-(5-phospho-D-ribosyl)imidazole-4-carboxylate: step 1/2. The polypeptide is Phosphoribosylaminoimidazole-succinocarboxamide synthase (Pseudomonas savastanoi pv. phaseolicola (strain 1448A / Race 6) (Pseudomonas syringae pv. phaseolicola (strain 1448A / Race 6))).